A 479-amino-acid chain; its full sequence is Poly(A) polymerase catalytic subunit (479 aa).

Active-site residues include Asp202 and Asp204. Ca(2+)-binding residues include Asp202, Asp204, and Asp253.

This sequence belongs to the poxviridae poly(A) polymerase catalytic subunit family. In terms of assembly, heterodimer of a large (catalytic) subunit and a small (regulatory) subunit.

The enzyme catalyses RNA(n) + ATP = RNA(n)-3'-adenine ribonucleotide + diphosphate. Polymerase that creates the 3'-poly(A) tail of mRNA's. This is Poly(A) polymerase catalytic subunit (OPG063) from Cynomys gunnisoni (Gunnison's prairie dog).